The sequence spans 101 residues: Small ribosomal subunit protein uS14 (101 aa).

Belongs to the universal ribosomal protein uS14 family. In terms of assembly, part of the 30S ribosomal subunit. Contacts proteins S3 and S10.

Binds 16S rRNA, required for the assembly of 30S particles and may also be responsible for determining the conformation of the 16S rRNA at the A site. The chain is Small ribosomal subunit protein uS14 from Shewanella sp. (strain ANA-3).